The chain runs to 397 residues: Ribosomal RNA large subunit methyltransferase I (397 aa).

One can recognise a PUA domain in the interval 2 to 80 (AIRIKLKPGR…KEETIDADFF (79 aa)).

The protein belongs to the methyltransferase superfamily. RlmI family.

It is found in the cytoplasm. The catalysed reaction is cytidine(1962) in 23S rRNA + S-adenosyl-L-methionine = 5-methylcytidine(1962) in 23S rRNA + S-adenosyl-L-homocysteine + H(+). Specifically methylates the cytosine at position 1962 (m5C1962) of 23S rRNA. The polypeptide is Ribosomal RNA large subunit methyltransferase I (Shewanella frigidimarina (strain NCIMB 400)).